The sequence spans 406 residues: Calreticulin (406 aa).

An N-terminal signal peptide occupies residues 1–17 (MMWCKTVIVLLATVGFI). Cys-105 and Cys-137 form a disulfide bridge. Residues Tyr-109, Lys-111, Tyr-128, and Asp-135 each coordinate an alpha-D-glucoside. A run of 7 repeats spans residues 191 to 202 (VESGNLEDDWDF), 210 to 221 (DPTATKPEDWDD), 227 to 238 (DPDDKKPEDWDK), 244 to 255 (DPDATKPEDWDD), 259 to 269 (GEWEPPMIDNP), 273 to 283 (GEWQPKQLDNP), and 287 to 297 (GAWEHPEIANP). The 4 X approximate repeats stretch occupies residues 191–255 (VESGNLEDDW…DATKPEDWDD (65 aa)). The segment covering 207–251 (KIKDPTATKPEDWDDRATIPDPDDKKPEDWDKPEHIPDPDATKPE) has biased composition (basic and acidic residues). The tract at residues 207-259 (KIKDPTATKPEDWDDRATIPDPDDKKPEDWDKPEHIPDPDATKPEDWDDEMDG) is disordered. The interval 259–297 (GEWEPPMIDNPEFKGEWQPKQLDNPNYKGAWEHPEIANP) is 3 X approximate repeats. Asp-317 provides a ligand contact to an alpha-D-glucoside. The tract at residues 347–406 (KNTQAGEKKMKEAQDEVQRKKDEEEAKKASDKDDEDEDDDDEEKDDESKQDKDQSEHDEL) is disordered. Over residues 352–377 (GEKKMKEAQDEVQRKKDEEEAKKASD) the composition is skewed to basic and acidic residues. The segment covering 378–391 (KDDEDEDDDDEEKD) has biased composition (acidic residues). Over residues 392–406 (DESKQDKDQSEHDEL) the composition is skewed to basic and acidic residues.

It belongs to the calreticulin family.

Its subcellular location is the endoplasmic reticulum lumen. Molecular calcium-binding chaperone promoting folding, oligomeric assembly and quality control in the ER via the calreticulin/calnexin cycle. This lectin may interact transiently with almost all of the monoglucosylated glycoproteins that are synthesized in the ER. This chain is Calreticulin, found in Drosophila melanogaster (Fruit fly).